An 858-amino-acid polypeptide reads, in one-letter code: Autoinducer 2 sensor kinase/phosphatase LuxQ (858 aa).

The next 2 membrane-spanning stretches (helical) occupy residues 14 to 34 and 362 to 382; these read STLI…GIFV and LFNF…LIQI. Residues 488–710 form the Histidine kinase domain; sequence KMSHEIRTPI…TFVVTLPVKD (223 aa). His-491 bears the Phosphohistidine; by autocatalysis mark. The Response regulatory domain occupies 735–850; it reads KVLLVEDNHT…ALHEAFVDFK (116 aa). The residue at position 784 (Asp-784) is a 4-aspartylphosphate.

In terms of assembly, binds the complex formed by the autoinducer and LuxP.

Its subcellular location is the cell inner membrane. The enzyme catalyses ATP + protein L-histidine = ADP + protein N-phospho-L-histidine.. In terms of biological role, at low cell density, in absence of autoinducer has a kinase activity, and autophosphorylates on a histidine residue. The phosphoryl group is then transferred to an aspartate residue in the response regulator domain. The phosphoryl group is transferred to LuxU, and ultimately to LuxO. At high cell density, in the presence of autoinducer, the kinase activity is inactivated, and the response regulator domain has a phosphatase activity. In Vibrio parahaemolyticus serotype O3:K6 (strain RIMD 2210633), this protein is Autoinducer 2 sensor kinase/phosphatase LuxQ (luxQ).